A 260-amino-acid chain; its full sequence is UPF0246 protein Veis_4789 (260 aa).

The protein belongs to the UPF0246 family.

The protein is UPF0246 protein Veis_4789 of Verminephrobacter eiseniae (strain EF01-2).